Here is a 621-residue protein sequence, read N- to C-terminus: Phosphoenolpyruvate carboxykinase [GTP] (621 aa).

Substrate-binding positions include Arg82 and 220-222; that span reads YGG. Residues Lys229 and His249 each coordinate Mn(2+). Ser271 is a binding site for substrate. Residue 272-277 participates in GTP binding; sequence QCGKTN. Cys273 is a catalytic residue. Mn(2+) is bound at residue Asp296. 386–388 provides a ligand contact to substrate; that stretch reads NSR. GTP is bound by residues Arg388, Arg419, and 514-517; that span reads FGEN.

It belongs to the phosphoenolpyruvate carboxykinase [GTP] family. As to quaternary structure, monomer. Requires Mn(2+) as cofactor.

The protein resides in the cytoplasm. It carries out the reaction oxaloacetate + GTP = phosphoenolpyruvate + GDP + CO2. Its pathway is carbohydrate biosynthesis; gluconeogenesis. Functionally, catalyzes the conversion of oxaloacetate (OAA) to phosphoenolpyruvate (PEP), the rate-limiting step in the metabolic pathway that produces glucose from lactate and other precursors derived from the citric acid cycle. In Corynebacterium kroppenstedtii (strain DSM 44385 / JCM 11950 / CIP 105744 / CCUG 35717), this protein is Phosphoenolpyruvate carboxykinase [GTP].